Here is a 277-residue protein sequence, read N- to C-terminus: uncharacterized protein (277 aa).

The next 7 helical transmembrane spans lie at 23-43 (CIGGLMSAIVGAMSGVTTAFI), 61-81 (FLIYFGIIFIIGLIVSAIIGG), 117-137 (LVLLNIIFYFIPAILFVFGIF), 144-164 (IIGAFLIIISILIFIISVISL), 197-217 (YIILVIIIAIINFIISLIVVL), 221-241 (IIDIFISYSALANSILTIIYI), and 243-263 (IKGISYALSTFVDFYLGVFSI).

The protein to M.jannaschii MJ1189.

The protein localises to the cell membrane. This is an uncharacterized protein from Methanocaldococcus jannaschii (strain ATCC 43067 / DSM 2661 / JAL-1 / JCM 10045 / NBRC 100440) (Methanococcus jannaschii).